A 74-amino-acid chain; its full sequence is UPF0057 membrane protein At4g30660 (74 aa).

2 consecutive transmembrane segments (helical) span residues 4 to 24 (NCEILCEIIIAILLPPLGVCF) and 37 to 57 (LVLTILGYVPGIIYAIYVIVF).

This sequence belongs to the UPF0057 (PMP3) family.

It localises to the membrane. The sequence is that of UPF0057 membrane protein At4g30660 from Arabidopsis thaliana (Mouse-ear cress).